Reading from the N-terminus, the 744-residue chain is Polyribonucleotide nucleotidyltransferase (744 aa).

Positions 487 and 493 each coordinate Mg(2+). The KH domain occupies 554–613 (PSTTTLKVDKDKIRDIIGPGGKVIKEICETSGAKIDISDDGTVSIYASDKDKLKVALDKV). The 69-residue stretch at 623–691 (GEVFNGTVMK…NKGKAKLTIK (69 aa)) folds into the S1 motif domain. A disordered region spans residues 691-744 (KNAEKDKSSANPKPKNSPKEHQEPEKRDNGKKRAWNEDNNAETTEVVTERKYFS). A compositionally biased stretch (basic and acidic residues) spans 707–718 (SPKEHQEPEKRD). Over residues 727-736 (EDNNAETTEV) the composition is skewed to polar residues.

This sequence belongs to the polyribonucleotide nucleotidyltransferase family. Requires Mg(2+) as cofactor.

The protein resides in the cytoplasm. The catalysed reaction is RNA(n+1) + phosphate = RNA(n) + a ribonucleoside 5'-diphosphate. Functionally, involved in mRNA degradation. Catalyzes the phosphorolysis of single-stranded polyribonucleotides processively in the 3'- to 5'-direction. This Rickettsia bellii (strain OSU 85-389) protein is Polyribonucleotide nucleotidyltransferase.